The chain runs to 180 residues: Large ribosomal subunit protein uL6 (180 aa).

This sequence belongs to the universal ribosomal protein uL6 family. Part of the 50S ribosomal subunit.

In terms of biological role, this protein binds to the 23S rRNA, and is important in its secondary structure. It is located near the subunit interface in the base of the L7/L12 stalk, and near the tRNA binding site of the peptidyltransferase center. The sequence is that of Large ribosomal subunit protein uL6 from Christiangramia forsetii (strain DSM 17595 / CGMCC 1.15422 / KT0803) (Gramella forsetii).